The chain runs to 213 residues: Pyrrolidone-carboxylate peptidase (213 aa).

Residues Glu-78, Cys-141, and His-165 contribute to the active site.

It belongs to the peptidase C15 family. Homotetramer.

The protein resides in the cytoplasm. It catalyses the reaction Release of an N-terminal pyroglutamyl group from a polypeptide, the second amino acid generally not being Pro.. In terms of biological role, removes 5-oxoproline from various penultimate amino acid residues except L-proline. This chain is Pyrrolidone-carboxylate peptidase, found in Staphylococcus carnosus (strain TM300).